The primary structure comprises 525 residues: Glutamate synthase large subunit-like protein YerD (525 aa).

Residues 4–24 (IIIALIAFIIGIIAIPIVLFA) form a helical membrane-spanning segment.

Belongs to the glutamate synthase family.

It localises to the cell membrane. The sequence is that of Glutamate synthase large subunit-like protein YerD (yerD) from Bacillus subtilis (strain 168).